The sequence spans 196 residues: ATP-dependent Clp protease proteolytic subunit (196 aa).

Ser98 acts as the Nucleophile in catalysis. His123 is a catalytic residue.

It belongs to the peptidase S14 family. In terms of assembly, fourteen ClpP subunits assemble into 2 heptameric rings which stack back to back to give a disk-like structure with a central cavity, resembling the structure of eukaryotic proteasomes.

It localises to the cytoplasm. It carries out the reaction Hydrolysis of proteins to small peptides in the presence of ATP and magnesium. alpha-casein is the usual test substrate. In the absence of ATP, only oligopeptides shorter than five residues are hydrolyzed (such as succinyl-Leu-Tyr-|-NHMec, and Leu-Tyr-Leu-|-Tyr-Trp, in which cleavage of the -Tyr-|-Leu- and -Tyr-|-Trp bonds also occurs).. In terms of biological role, cleaves peptides in various proteins in a process that requires ATP hydrolysis. Has a chymotrypsin-like activity. Plays a major role in the degradation of misfolded proteins. The polypeptide is ATP-dependent Clp protease proteolytic subunit (Sulfurimonas denitrificans (strain ATCC 33889 / DSM 1251) (Thiomicrospira denitrificans (strain ATCC 33889 / DSM 1251))).